Here is a 604-residue protein sequence, read N- to C-terminus: MGLLYKGSKLLNTILDSLEDQEGGAMYISCDVSNGGPVEPETGYVPNNPLFGLALDSPQQECAASCVGCLSCQGSTALPISSLTSSDFDCGGCFDPTIGVGVGIGGGHIQISTTPPASSGNGSSNNGAGGGSSGNHGYWSTDEMASTFPGLPPLDIDPLPSLFPFSPCGASYNFAAGNPHQAASLSYTVHPHQMLISPNSHNHGQMHSQHQQHQHQQSQVQASHVGNSLLQSSGGNNIGSNGSAGGVANAASCYYETSAGTAAPPPPPAAAMYPSMSVNVSMNMTMHHGYGAGDAGGVPMQCSQMNWTPPSNSTSAAAAAAAVNVLYPPLLSPGHYPASATYSFTADFRAPAPTGLGALPPLTVGEKESPSPPANSSLAGYYPTGVGNQGYTPPHKSPTSYQAAALGLSLSAFEDEEDSNEDLDGDEGSSGGEMKPNLCRLCGKTYARPSTLKTHLRTHSGERPYRCPDCNKSFSQAANLTAHVRTHTGQKPFRCPICDRRFSQSSSVTTHMRTHSGERPYRCSSCKKSFSDSSTLTKHLRIHSGEKPYQCKLCLLRFSQSGNLNRHMRVHGNNNSSNGSNGATGVGGESSTGSGVGGGNSLLT.

Disordered stretches follow at residues 111–139, 199–237, 359–400, and 414–434; these read ISTTPPASSGNGSSNNGAGGGSSGNHGYW, NSHNHGQMHSQHQQHQHQQSQVQASHVGNSLLQSSGGNN, LPPL…SPTS, and EDEEDSNEDLDGDEGSSGGEM. Composition is skewed to low complexity over residues 117–126 and 200–237; these read ASSGNGSSNN and SHNHGQMHSQHQQHQHQQSQVQASHVGNSLLQSSGGNN. Residues 414–427 show a composition bias toward acidic residues; sequence EDEEDSNEDLDGDE. 5 consecutive C2H2-type zinc fingers follow at residues 437–459, 465–487, 493–515, 521–543, and 549–571; these read NLCRLCGKTYARPSTLKTHLRTH, YRCPDCNKSFSQAANLTAHVRTH, FRCPICDRRFSQSSSVTTHMRTH, YRCSSCKKSFSDSSTLTKHLRIH, and YQCKLCLLRFSQSGNLNRHMRVH. A disordered region spans residues 566 to 604; sequence RHMRVHGNNNSSNGSNGATGVGGESSTGSGVGGGNSLLT. Over residues 572-581 the composition is skewed to low complexity; that stretch reads GNNNSSNGSN. The segment covering 582-604 has biased composition (gly residues); sequence GATGVGGESSTGSGVGGGNSLLT.

The protein resides in the nucleus. Functionally, transcription factor required for gene expression specific to photoreceptor cells. This is Protein glass (gl) from Drosophila melanogaster (Fruit fly).